The sequence spans 391 residues: Pectin acetylesterase 7 (391 aa).

The first 23 residues, 1–23 (MGRLKQCWSSLLVLAVLVIGTGA), serve as a signal peptide directing secretion. Active-site charge relay system residues include serine 171, aspartate 267, and histidine 334.

The protein belongs to the pectinacetylesterase family.

It localises to the secreted. Its subcellular location is the cell wall. Hydrolyzes acetyl esters in homogalacturonan regions of pectin. In type I primary cell wall, galacturonic acid residues of pectin can be acetylated at the O-2 and O-3 positions. Decreasing the degree of acetylation of pectin gels in vitro alters their physical properties. This Arabidopsis thaliana (Mouse-ear cress) protein is Pectin acetylesterase 7.